The sequence spans 268 residues: Undecaprenyl-diphosphatase (268 aa).

Transmembrane regions (helical) follow at residues Pro41–Phe61, Ile89–Tyr109, Ile114–Ile134, Leu155–Ile175, Phe191–Ser211, Phe218–Ile238, and Asn248–Leu268.

Belongs to the UppP family.

Its subcellular location is the cell inner membrane. The catalysed reaction is di-trans,octa-cis-undecaprenyl diphosphate + H2O = di-trans,octa-cis-undecaprenyl phosphate + phosphate + H(+). Catalyzes the dephosphorylation of undecaprenyl diphosphate (UPP). Confers resistance to bacitracin. This chain is Undecaprenyl-diphosphatase, found in Prochlorococcus marinus (strain MIT 9312).